A 489-amino-acid polypeptide reads, in one-letter code: Probable cytosol aminopeptidase (489 aa).

Mn(2+)-binding residues include K255 and D260. K267 is an active-site residue. Mn(2+) is bound by residues D279, D339, and E341. R343 is a catalytic residue.

This sequence belongs to the peptidase M17 family. Mn(2+) is required as a cofactor.

The protein localises to the cytoplasm. It catalyses the reaction Release of an N-terminal amino acid, Xaa-|-Yaa-, in which Xaa is preferably Leu, but may be other amino acids including Pro although not Arg or Lys, and Yaa may be Pro. Amino acid amides and methyl esters are also readily hydrolyzed, but rates on arylamides are exceedingly low.. It carries out the reaction Release of an N-terminal amino acid, preferentially leucine, but not glutamic or aspartic acids.. In terms of biological role, presumably involved in the processing and regular turnover of intracellular proteins. Catalyzes the removal of unsubstituted N-terminal amino acids from various peptides. The sequence is that of Probable cytosol aminopeptidase from Synechococcus sp. (strain CC9605).